Here is a 607-residue protein sequence, read N- to C-terminus: Zinc finger CCCH domain-containing protein 66 (607 aa).

2 ANK repeats span residues 57-87 (EERT…DVNR) and 92-124 (DGAT…NPDS). Acidic residues predominate over residues 161–178 (LNEVNGQEESEPEVEVEV). A disordered region spans residues 161–193 (LNEVNGQEESEPEVEVEVEVSPPRGSERKEYPV). 2 consecutive C3H1-type zinc fingers follow at residues 254-276 (PCPE…HGIF) and 284-308 (QYRT…HKPE). A disordered region spans residues 342–363 (ISPLPIGATTTPPLSPNGVSSP). Polar residues predominate over residues 349–361 (ATTTPPLSPNGVS).

The polypeptide is Zinc finger CCCH domain-containing protein 66 (Arabidopsis thaliana (Mouse-ear cress)).